The following is a 182-amino-acid chain: MKVDKKFLKKVVKGMIKVLGNDEEKLSNTSKALDILSLLYKSNSNFRNIILSPTVSLEEKEKAVSKILDVLNLPQEVKPFIFLAVKENKGNIIKELNKAFRFEVEKFFATVQGEVITAHPIDEDLLNQIKTVLESKIGKKIEFTVKEDKSLIGGAVIKAGSYILDTSVRNYLKQLERSLTRF.

This sequence belongs to the ATPase delta chain family. In terms of assembly, F-type ATPases have 2 components, F(1) - the catalytic core - and F(0) - the membrane proton channel. F(1) has five subunits: alpha(3), beta(3), gamma(1), delta(1), epsilon(1). F(0) has three main subunits: a(1), b(2) and c(10-14). The alpha and beta chains form an alternating ring which encloses part of the gamma chain. F(1) is attached to F(0) by a central stalk formed by the gamma and epsilon chains, while a peripheral stalk is formed by the delta and b chains.

The protein resides in the cell inner membrane. Its function is as follows. F(1)F(0) ATP synthase produces ATP from ADP in the presence of a proton or sodium gradient. F-type ATPases consist of two structural domains, F(1) containing the extramembraneous catalytic core and F(0) containing the membrane proton channel, linked together by a central stalk and a peripheral stalk. During catalysis, ATP synthesis in the catalytic domain of F(1) is coupled via a rotary mechanism of the central stalk subunits to proton translocation. This protein is part of the stalk that links CF(0) to CF(1). It either transmits conformational changes from CF(0) to CF(1) or is implicated in proton conduction. This chain is ATP synthase subunit delta, found in Sulfurihydrogenibium azorense (strain DSM 15241 / OCM 825 / Az-Fu1).